The primary structure comprises 1380 residues: DNA-directed RNA polymerase subunit beta (1380 aa).

Belongs to the RNA polymerase beta chain family. In terms of assembly, the RNAP catalytic core consists of 2 alpha, 1 beta, 1 beta' and 1 omega subunit. When a sigma factor is associated with the core the holoenzyme is formed, which can initiate transcription.

It carries out the reaction RNA(n) + a ribonucleoside 5'-triphosphate = RNA(n+1) + diphosphate. In terms of biological role, DNA-dependent RNA polymerase catalyzes the transcription of DNA into RNA using the four ribonucleoside triphosphates as substrates. This chain is DNA-directed RNA polymerase subunit beta, found in Nitrobacter hamburgensis (strain DSM 10229 / NCIMB 13809 / X14).